The primary structure comprises 467 residues: Asparagine--tRNA ligase (467 aa).

The protein belongs to the class-II aminoacyl-tRNA synthetase family. As to quaternary structure, homodimer.

The protein localises to the cytoplasm. The enzyme catalyses tRNA(Asn) + L-asparagine + ATP = L-asparaginyl-tRNA(Asn) + AMP + diphosphate + H(+). In Protochlamydia amoebophila (strain UWE25), this protein is Asparagine--tRNA ligase.